The primary structure comprises 740 residues: Transcription activator of gluconeogenesis NCU03938 (740 aa).

Residues 1–66 (MPDDVGPAEA…KYDPKDPLRP (66 aa)) are disordered. The segment covering 19–37 (SDNEYDETEVTTKDDDDEK) has biased composition (acidic residues). The segment covering 52 to 65 (GDQKKKYDPKDPLR) has biased composition (basic and acidic residues). The zn(2)-C6 fungal-type DNA-binding region spans 75 to 103 (CYACQRAHLTCGDERPCQRCIKRGLAEAC). Disordered stretches follow at residues 333-405 (PAGP…RQRD), 532-579 (NSDT…KEQP), and 639-674 (APTA…PTGV). Over residues 337–351 (TSLQSPSTENNSPQP) the composition is skewed to polar residues. A PAS domain is found at 475–546 (ALFEHEEFMH…SISSKGGRGG (72 aa)). Over residues 639–658 (APTASGGSGSSNGTVVNGGP) the composition is skewed to low complexity.

Belongs to the ERT1/acuK family.

It is found in the nucleus. In terms of biological role, transcription factor which regulates nonfermentable carbon utilization. Activator of gluconeogenetic genes. In Neurospora crassa (strain ATCC 24698 / 74-OR23-1A / CBS 708.71 / DSM 1257 / FGSC 987), this protein is Transcription activator of gluconeogenesis NCU03938.